The primary structure comprises 934 residues: UPF0182 protein sync_1321 (934 aa).

Transmembrane regions (helical) follow at residues 2-22 (AKII…IVII), 45-65 (LLLQ…CALW), 86-106 (GYRY…VLAI), 129-149 (FSTG…IMFG), 165-185 (VCIC…FSIP), 208-228 (IAFG…TALW), 251-271 (HGLR…MWLS), 300-320 (LGSI…FSSV), and 327-347 (LILA…FPLM).

Belongs to the UPF0182 family.

The protein localises to the cell membrane. The polypeptide is UPF0182 protein sync_1321 (Synechococcus sp. (strain CC9311)).